A 205-amino-acid chain; its full sequence is Probable DNA-binding protein (205 aa).

The disordered stretch occupies residues 140–168; the sequence is GEGDGAPRPACPDFSTRGAETGNQGVQPG.

The protein is Probable DNA-binding protein of Homo sapiens (Human).